Consider the following 114-residue polypeptide: Non-specific lipid-transfer protein 1 (114 aa).

The N-terminal stretch at 1 to 23 (MEMVSKIACFVLLCMVVVAPHAE) is a signal peptide. Cystine bridges form between cysteine 27–cysteine 73, cysteine 37–cysteine 50, cysteine 51–cysteine 96, and cysteine 71–cysteine 110.

Belongs to the plant LTP family.

Plant non-specific lipid-transfer proteins transfer phospholipids as well as galactolipids across membranes. May play a role in wax or cutin deposition in the cell walls of expanding epidermal cells and certain secretory tissues. The polypeptide is Non-specific lipid-transfer protein 1 (LTP1) (Solanum pennellii (Tomato)).